We begin with the raw amino-acid sequence, 238 residues long: Ribonuclease PH (238 aa).

Phosphate is bound by residues Arg-86 and 124–126 (GTR).

It belongs to the RNase PH family. In terms of assembly, homohexameric ring arranged as a trimer of dimers.

It catalyses the reaction tRNA(n+1) + phosphate = tRNA(n) + a ribonucleoside 5'-diphosphate. In terms of biological role, phosphorolytic 3'-5' exoribonuclease that plays an important role in tRNA 3'-end maturation. Removes nucleotide residues following the 3'-CCA terminus of tRNAs; can also add nucleotides to the ends of RNA molecules by using nucleoside diphosphates as substrates, but this may not be physiologically important. Probably plays a role in initiation of 16S rRNA degradation (leading to ribosome degradation) during starvation. The polypeptide is Ribonuclease PH (Haemophilus influenzae (strain PittGG)).